A 526-amino-acid chain; its full sequence is Putative bifunctional polymyxin resistance protein ArnA (526 aa).

The segment at 1–170 (MVKRADAGAI…TLGLVQGSRL (170 aa)) is formyltransferase ArnAFT. 2 to 6 (VKRAD) contacts (6R)-10-formyltetrahydrofolate. Positions 180–526 (RRTRVLILGV…RTVDLTDKPS (347 aa)) are dehydrogenase ArnADH. Residues D213 and 234 to 235 (DI) contribute to the NAD(+) site. UDP-alpha-D-glucuronate is bound by residues A259, Y264, and 298 to 299 (TS). E300 functions as the Proton acceptor; for decarboxylase activity in the catalytic mechanism. UDP-alpha-D-glucuronate is bound by residues R326, N358, 392–401 (KLIDGGKQKR), and Y479. Catalysis depends on R485, which acts as the Proton donor; for decarboxylase activity.

It in the N-terminal section; belongs to the Fmt family. UDP-L-Ara4N formyltransferase subfamily. In the C-terminal section; belongs to the NAD(P)-dependent epimerase/dehydratase family. UDP-glucuronic acid decarboxylase subfamily. As to quaternary structure, homohexamer, formed by a dimer of trimers.

It carries out the reaction UDP-alpha-D-glucuronate + NAD(+) = UDP-beta-L-threo-pentopyranos-4-ulose + CO2 + NADH. The enzyme catalyses UDP-4-amino-4-deoxy-beta-L-arabinose + (6R)-10-formyltetrahydrofolate = UDP-4-deoxy-4-formamido-beta-L-arabinose + (6S)-5,6,7,8-tetrahydrofolate + H(+). Its pathway is nucleotide-sugar biosynthesis; UDP-4-deoxy-4-formamido-beta-L-arabinose biosynthesis; UDP-4-deoxy-4-formamido-beta-L-arabinose from UDP-alpha-D-glucuronate: step 1/3. It functions in the pathway nucleotide-sugar biosynthesis; UDP-4-deoxy-4-formamido-beta-L-arabinose biosynthesis; UDP-4-deoxy-4-formamido-beta-L-arabinose from UDP-alpha-D-glucuronate: step 3/3. It participates in bacterial outer membrane biogenesis; lipopolysaccharide biosynthesis. In terms of biological role, bifunctional enzyme that catalyzes the oxidative decarboxylation of UDP-glucuronic acid (UDP-GlcUA) to UDP-4-keto-arabinose (UDP-Ara4O) and the addition of a formyl group to UDP-4-amino-4-deoxy-L-arabinose (UDP-L-Ara4N) to form UDP-L-4-formamido-arabinose (UDP-L-Ara4FN). The modified arabinose is attached to lipid A and is required for resistance to polymyxin and cationic antimicrobial peptides. This Shigella boydii serotype 18 (strain CDC 3083-94 / BS512) protein is Putative bifunctional polymyxin resistance protein ArnA (arnA).